A 288-amino-acid chain; its full sequence is Protease HtpX homolog (288 aa).

A run of 2 helical transmembrane segments spans residues 1–21 (MHTI…LLAG) and 23–43 (IIGG…MNFF). Zn(2+) is bound at residue His130. Residue Glu131 is part of the active site. A Zn(2+)-binding site is contributed by His134. 2 consecutive transmembrane segments (helical) span residues 140-160 (ILIS…AEMA) and 175-195 (IGGL…AMII). Glu204 contributes to the Zn(2+) binding site.

The protein belongs to the peptidase M48B family. It depends on Zn(2+) as a cofactor.

It localises to the cell inner membrane. This chain is Protease HtpX homolog, found in Persephonella marina (strain DSM 14350 / EX-H1).